We begin with the raw amino-acid sequence, 671 residues long: MEPIEQQLTELRTTLRHHEYLYHVMDAPEIPDAEYDRLMRELRELEAQRPDLITPDSPTQRVGAAPLTAFNQIRHEVPMLSLDNVFDEESFLAFNKRVQDRLKSTENVIWCCELKLDGLAVSILYENGVLVSAATRGDGTTGEDITSNVRTIRAIPLKLHGDNIPARLEVRGEVFLPQAGFEKINEDARRTGGKVFANPRNAAAGSLRQLDPRITAKRPLTFFCYGVGILEGGELPDTHLGRLLQFKAWGLPVSDRVTLCDSPQAVLDFYHNVEKDRPTLGFDIDGVVIKVNSLALQELLGFVARAPRWAVAFKFPAQEQMTFVRDVEFQVGRTGAITPVARLEPVQVAGVLVSNATLHNADEIERLGLRIGDKVVIRRAGDVIPQVVNVVLSERPEETRPIVFPTHCPVCGSDVERVEGEAVTRCTGGLICGAQRKESLKHFVSRRAMDVDGMGDKIIDQLVEREYVHTPADLFRLTAGKLTGLDRMGPKSAQNVVNALEKSKTTTFARFLYALGIREVGEATAAGLAAYFGTLEALQAATIDELQKVPDVGIVVATHVFNFFAEESNRDVIGQLLAEGVHWPAPVVINVQEIDSPFAGKTVVLTGSLSQMSRDDAKARLVALGAKVAGSVSKKTDLVIAGEAAGSKLAKAQELGITVIDEAEMIRLLGA.

Residues 32–36 (DAEYD), 81–82 (SL), and Glu113 contribute to the NAD(+) site. Lys115 acts as the N6-AMP-lysine intermediate in catalysis. NAD(+) contacts are provided by Arg136, Glu173, Lys290, and Lys314. 4 residues coordinate Zn(2+): Cys408, Cys411, Cys426, and Cys432. The 79-residue stretch at 593 to 671 (EIDSPFAGKT…EAEMIRLLGA (79 aa)) folds into the BRCT domain.

This sequence belongs to the NAD-dependent DNA ligase family. LigA subfamily. The cofactor is Mg(2+). Mn(2+) is required as a cofactor.

The enzyme catalyses NAD(+) + (deoxyribonucleotide)n-3'-hydroxyl + 5'-phospho-(deoxyribonucleotide)m = (deoxyribonucleotide)n+m + AMP + beta-nicotinamide D-nucleotide.. In terms of biological role, DNA ligase that catalyzes the formation of phosphodiester linkages between 5'-phosphoryl and 3'-hydroxyl groups in double-stranded DNA using NAD as a coenzyme and as the energy source for the reaction. It is essential for DNA replication and repair of damaged DNA. The protein is DNA ligase of Salmonella typhimurium (strain LT2 / SGSC1412 / ATCC 700720).